Consider the following 1605-residue polypeptide: Kinesin-like protein klp-12 (1605 aa).

Residues 5–358 (CVQVALRIRP…MKYANRAKEI (354 aa)) enclose the Kinesin motor domain. ATP is bound at residue 84 to 91 (GQTGSGKT). 2 residues coordinate Mg(2+): Thr91 and Ser217. Disordered stretches follow at residues 548 to 596 (GENV…EESE), 1085 to 1152 (VSDA…SNNN), and 1198 to 1232 (SRSNLMSSSSSTTTTTLSSSNLLNPRGTTSSSSSK). The segment covering 550–559 (NVSSEYSSMA) has biased composition (polar residues). Residues 560–596 (QDEDGTSNEAEELLDEEDLDEDEDETAEEKQEQEESE) are compositionally biased toward acidic residues. The stretch at 575 to 730 (EEDLDEDEDE…KKAKVELIKK (156 aa)) forms a coiled coil. The segment covering 1116–1152 (VSTSPASTSFANSTSQSPSFSRNTRFRSTVGGVSNNN) has biased composition (polar residues). The span at 1200–1232 (SNLMSSSSSTTTTTLSSSNLLNPRGTTSSSSSK) shows a compositional bias: low complexity. WD repeat units follow at residues 1282–1319 (GHARGVLSVDVNEKLMVTGSKDRTAKLWDIEACREIRT), 1389–1427 (FLETLITAADVDPTGQLLFTSFSAYVRVWNLREWKPLGR), 1525–1566 (AHQQ…RMKL), and 1573–1605 (AHQEGINDMCSTKSMLFTASGDSTVGFWKSNAV).

The protein belongs to the TRAFAC class myosin-kinesin ATPase superfamily. Kinesin family. In terms of assembly, component of a complex at least composed of alpha tubulin and beta tubulin. Within the complex, interacts with the alpha tubulin and beta tubulin dimer.

The protein resides in the cytoplasm. It localises to the cytoskeleton. Its function is as follows. Microtubule-binding motor protein which has ATPase activity. In complex with alpha and beta tubulins, preferentially binds to the growing microtubule plus-end to stabilize it and detaches following ATP hydrolysis. Negatively regulates axonal length through inhibiting microtubule polymerization at its plus-end. This is Kinesin-like protein klp-12 from Caenorhabditis elegans.